The sequence spans 159 residues: Ribosomal RNA large subunit methyltransferase H (159 aa).

The S-adenosyl-L-methionine site is built by leucine 76 and glycine 108.

The protein belongs to the RNA methyltransferase RlmH family. Homodimer.

The protein resides in the cytoplasm. The catalysed reaction is pseudouridine(1915) in 23S rRNA + S-adenosyl-L-methionine = N(3)-methylpseudouridine(1915) in 23S rRNA + S-adenosyl-L-homocysteine + H(+). Specifically methylates the pseudouridine at position 1915 (m3Psi1915) in 23S rRNA. The sequence is that of Ribosomal RNA large subunit methyltransferase H from Limosilactobacillus fermentum (strain NBRC 3956 / LMG 18251) (Lactobacillus fermentum).